A 1216-amino-acid polypeptide reads, in one-letter code: Phospholipase D B (1216 aa).

The segment covering 1-14 has biased composition (polar residues); that stretch reads MNLSQEHAINQNLH. Positions 1-48 are disordered; the sequence is MNLSQEHAINQNLHKNQKNEEKIEKKTINKDGRGQMNYDGEEGQGEKS. A compositionally biased stretch (basic and acidic residues) spans 17 to 33; the sequence is QKNEEKIEKKTINKDGR. EF-hand domains lie at 196 to 231 and 232 to 267; these read RNAD…MCRG and TKKE…ISDI. Residues Asp209, Asn211, Asp213, Lys215, and Glu220 each coordinate Ca(2+). A PH domain is found at 347-462; the sequence is EINMNGQLTK…WVNAIRFHSR (116 aa). The 28-residue stretch at 585 to 612 folds into the PLD phosphodiesterase 1 domain; that stretch reads LSWSHHQKNAIIDQQIAFVGGIDICLMR. Active-site residues include His590, Lys592, and Asp597. Residues 732-844 form a disordered region; sequence VSYGREKPTH…GLKSKNYKNN (113 aa). The span at 776 to 789 shows a compositional bias: low complexity; that stretch reads NNSTNSENSENSYS. A compositionally biased stretch (acidic residues) spans 790–813; it reads EFDEEDEEGNQEEEDEDEFDEFEK. The PLD phosphodiesterase 2 domain maps to 1036 to 1063; sequence EQIYVHSKVLIVDDRVAVIGSCNINDRS. Active-site residues include His1041, Lys1043, and Asp1048.

This sequence belongs to the phospholipase D family.

It is found in the cytoplasmic vesicle. The protein resides in the cytoplasm. Its subcellular location is the cell cortex. The enzyme catalyses a 1,2-diacyl-sn-glycero-3-phosphocholine + H2O = a 1,2-diacyl-sn-glycero-3-phosphate + choline + H(+). Inhibited by butan-1-ol. Plays a role in cell growth. Hydrolyzes membrane phospholipids, such as PtdCho (phosphatidylcholine), producing the free headgroup and PtdOH (phosphatidic acid; signaling molecule on its own). Involved in the inhibition of actin-based motility and endocytosis. Its inhibition causes complete collapse of F-actin organization. Plays an important role in cell migration by localizing along the anterior cell membrane. Overexpression leads to the inability to aggregate even at higher cell density. Also known as a negative regulator of quorum sensing. The polypeptide is Phospholipase D B (pldB) (Dictyostelium discoideum (Social amoeba)).